The chain runs to 287 residues: Probable ABC transporter extracellular-binding protein YckB (287 aa).

A signal peptide spans M1–A24. C25 carries N-palmitoyl cysteine lipidation. The S-diacylglycerol cysteine moiety is linked to residue C25.

Belongs to the bacterial solute-binding protein 3 family.

It localises to the cell membrane. Probably part of a binding-protein-dependent transport system. This is Probable ABC transporter extracellular-binding protein YckB (yckB) from Bacillus subtilis (strain 168).